Consider the following 417-residue polypeptide: Gamma-glutamyl phosphate reductase (417 aa).

It belongs to the gamma-glutamyl phosphate reductase family.

It is found in the cytoplasm. The enzyme catalyses L-glutamate 5-semialdehyde + phosphate + NADP(+) = L-glutamyl 5-phosphate + NADPH + H(+). It functions in the pathway amino-acid biosynthesis; L-proline biosynthesis; L-glutamate 5-semialdehyde from L-glutamate: step 2/2. Catalyzes the NADPH-dependent reduction of L-glutamate 5-phosphate into L-glutamate 5-semialdehyde and phosphate. The product spontaneously undergoes cyclization to form 1-pyrroline-5-carboxylate. The protein is Gamma-glutamyl phosphate reductase of Legionella pneumophila (strain Lens).